Reading from the N-terminus, the 289-residue chain is Transcription factor MafA (289 aa).

Low complexity predominate over residues serine 52–proline 73. Disordered stretches follow at residues serine 52–alanine 87 and histidine 126–histidine 164. Polar residues predominate over residues glycine 74–alanine 87. Residues glycine 152 to histidine 164 are compositionally biased toward basic residues. Residues arginine 201–arginine 226 form a basic motif region. One can recognise a bZIP domain in the interval arginine 201 to leucine 264. Residues leucine 229 to leucine 250 are leucine-zipper. Residues serine 266–methionine 289 are disordered. Residues arginine 267–proline 276 are compositionally biased toward polar residues.

Belongs to the bZIP family. Maf subfamily.

Its subcellular location is the nucleus. Functionally, transcription factor, possibly involved in transcription regulation during lens development. The protein is Transcription factor MafA (mafa) of Xenopus tropicalis (Western clawed frog).